We begin with the raw amino-acid sequence, 248 residues long: Trypsin I-P1 (248 aa).

A signal peptide spans 1 to 15; sequence MKFLVLVAFVGVTVA. Residues 16-25 constitute a propeptide, activation peptide; it reads FPISDEDDDK. The Peptidase S1 domain occupies 26 to 246; that stretch reads IVGGYSCARS…YVSWIKTTMS (221 aa). 6 disulfides stabilise this stretch: cysteine 32/cysteine 162, cysteine 50/cysteine 66, cysteine 134/cysteine 235, cysteine 141/cysteine 208, cysteine 173/cysteine 187, and cysteine 198/cysteine 222. The active-site Charge relay system is the histidine 65. Residues glutamate 77, asparagine 79, and glutamate 87 each contribute to the Ca(2+) site. The active-site Charge relay system is aspartate 109. The Charge relay system role is filled by serine 202.

It belongs to the peptidase S1 family. The cofactor is Ca(2+). High levels are seen in the pancreas while lower levels are found in the liver, spleen and thymus.

The protein localises to the secreted. It is found in the extracellular space. It catalyses the reaction Preferential cleavage: Arg-|-Xaa, Lys-|-Xaa.. This is Trypsin I-P1 from Gallus gallus (Chicken).